The following is a 450-amino-acid chain: Bifunctional protein GlmU (450 aa).

The pyrophosphorylase stretch occupies residues 1-217 (MKTLILAAGL…VDEITGVNNR (217 aa)). Residues 6 to 9 (LAAG), Lys20, Gln68, 73 to 74 (GT), 95 to 97 (YGD), Gly134, Glu146, Asn161, and Asn215 contribute to the UDP-N-acetyl-alpha-D-glucosamine site. Residue Asp97 coordinates Mg(2+). Asn215 contributes to the Mg(2+) binding site. The segment at 218–238 (IQLANLEKKIRRKINEKLMNQ) is linker. The interval 239–450 (GVRIIDPNAV…GGQKNANNKK (212 aa)) is N-acetyltransferase. 2 residues coordinate UDP-N-acetyl-alpha-D-glucosamine: Arg320 and Lys338. The active-site Proton acceptor is His350. Tyr353 and Asn364 together coordinate UDP-N-acetyl-alpha-D-glucosamine. Residues Ala367, 373–374 (NY), Ser392, Ala410, and Arg427 contribute to the acetyl-CoA site.

In the N-terminal section; belongs to the N-acetylglucosamine-1-phosphate uridyltransferase family. This sequence in the C-terminal section; belongs to the transferase hexapeptide repeat family. In terms of assembly, homotrimer. The cofactor is Mg(2+).

It localises to the cytoplasm. The enzyme catalyses alpha-D-glucosamine 1-phosphate + acetyl-CoA = N-acetyl-alpha-D-glucosamine 1-phosphate + CoA + H(+). The catalysed reaction is N-acetyl-alpha-D-glucosamine 1-phosphate + UTP + H(+) = UDP-N-acetyl-alpha-D-glucosamine + diphosphate. Its pathway is nucleotide-sugar biosynthesis; UDP-N-acetyl-alpha-D-glucosamine biosynthesis; N-acetyl-alpha-D-glucosamine 1-phosphate from alpha-D-glucosamine 6-phosphate (route II): step 2/2. The protein operates within nucleotide-sugar biosynthesis; UDP-N-acetyl-alpha-D-glucosamine biosynthesis; UDP-N-acetyl-alpha-D-glucosamine from N-acetyl-alpha-D-glucosamine 1-phosphate: step 1/1. It functions in the pathway bacterial outer membrane biogenesis; LPS lipid A biosynthesis. Its function is as follows. Catalyzes the last two sequential reactions in the de novo biosynthetic pathway for UDP-N-acetylglucosamine (UDP-GlcNAc). The C-terminal domain catalyzes the transfer of acetyl group from acetyl coenzyme A to glucosamine-1-phosphate (GlcN-1-P) to produce N-acetylglucosamine-1-phosphate (GlcNAc-1-P), which is converted into UDP-GlcNAc by the transfer of uridine 5-monophosphate (from uridine 5-triphosphate), a reaction catalyzed by the N-terminal domain. This is Bifunctional protein GlmU from Thermosipho melanesiensis (strain DSM 12029 / CIP 104789 / BI429).